A 547-amino-acid chain; its full sequence is Sodium-coupled neutral amino acid transporter 4 (547 aa).

Residues 1–34 form a disordered region; it reads MDPMELNNVSIEPDGDSCSGDSIQDSYTGMENSD. Over 1–104 the chain is Extracellular; sequence MDPMELNNVS…GLSYAMANTG (104 aa). The segment covering 19-31 has biased composition (polar residues); that stretch reads SGDSIQDSYTGME. S49 is subject to Phosphoserine. The helical transmembrane segment at 105–125 threads the bilayer; it reads IILFIIMLLTVAILSLYSVHL. Topologically, residues 126-151 are cytoplasmic; sequence LLKTAKEGGSLIYEKLGEKAFGWPGK. A helical transmembrane segment spans residues 152 to 172; the sequence is IGAFISITMQNIGAMSSYLFI. The Extracellular segment spans residues 173–195; sequence IKYELPEVIRAFMGLEENTGEWY. A helical membrane pass occupies residues 196 to 216; the sequence is LNGNYLVLFVSVGIILPLSLL. The Cytoplasmic segment spans residues 217–220; sequence KNLG. A helical membrane pass occupies residues 221–241; that stretch reads YLGYTSGFSLSCMVFFVSVVI. The Extracellular segment spans residues 242–332; it reads YKKFQIPCPL…PKYFVFNSRT (91 aa). The cysteines at positions 249 and 321 are disulfide-linked. N-linked (GlcNAc...) asparagine glycans are attached at residues N260, N264, and N276. Residues 333–353 form a helical membrane-spanning segment; sequence AYAIPILAFAFVCHPEVLPIY. The Cytoplasmic portion of the chain corresponds to 354 to 369; that stretch reads SELKDRSRRKMQTVSN. A helical membrane pass occupies residues 370–390; it reads ISISGMLVMYLLAALFGYLSF. Over 391 to 411 the chain is Extracellular; the sequence is YGDVEDELLHAYSKVYTFDTA. Residues 412–432 traverse the membrane as a helical segment; sequence LLMVRLAVLVAVTLTVPIVLF. Topologically, residues 433–453 are cytoplasmic; that stretch reads PIRTSVITLLFPRKPFSWLKH. The helical transmembrane segment at 454 to 474 threads the bilayer; sequence FGIAAIIIALNNILVILVPTI. At 475–476 the chain is on the extracellular side; sequence KY. The helical transmembrane segment at 477 to 497 threads the bilayer; it reads IFGFIGASSATMLIFILPAAF. Topologically, residues 498–514 are cytoplasmic; the sequence is YLKLVKKEPLRSPQKIG. A helical membrane pass occupies residues 515 to 535; it reads ALVFLVTGIIFMMGSMALIIL. Residues 536–547 lie on the Extracellular side of the membrane; sequence DWIYNPPNPNHH.

This sequence belongs to the amino acid/polyamine transporter 2 family. In terms of processing, the disulfide bond plays an important role in substrate transport, but has no effect on trafficking to the cell surface. In terms of tissue distribution, detected in liver, in hepatocytes surrounding the central vein. Not detected in heart, kidney, brain, lung, small intestine, spleen and thymus. Highly expressed in placenta.

The protein localises to the cell membrane. It is found in the cell projection. The protein resides in the microvillus membrane. It carries out the reaction L-alanine(in) + Na(+)(in) = L-alanine(out) + Na(+)(out). The enzyme catalyses L-methionine(in) + Na(+)(in) = L-methionine(out) + Na(+)(out). The catalysed reaction is L-asparagine(in) + Na(+)(in) = L-asparagine(out) + Na(+)(out). It catalyses the reaction L-threonine(in) + Na(+)(in) = L-threonine(out) + Na(+)(out). It carries out the reaction L-serine(in) + Na(+)(in) = L-serine(out) + Na(+)(out). The enzyme catalyses glycine(in) + Na(+)(in) = glycine(out) + Na(+)(out). The catalysed reaction is L-glutamine(in) + Na(+)(in) = L-glutamine(out) + Na(+)(out). It catalyses the reaction L-histidine(in) + Na(+)(in) = L-histidine(out) + Na(+)(out). It carries out the reaction L-cysteine(in) + Na(+)(in) = L-cysteine(out) + Na(+)(out). The enzyme catalyses L-proline(in) + Na(+)(in) = L-proline(out) + Na(+)(out). Symporter that cotransports neutral amino acids and sodium ions from the extraccellular to the intracellular side of the cell membrane. The transport is electrogenic, pH dependent and partially tolerates substitution of Na(+) by Li(+). Preferentially transports smaller amino acids, such as glycine, L-alanine, L-serine, L-asparagine and L-threonine, followed by L-cysteine, L-histidine, L-proline and L-glutamine and L-methionine. This Mus musculus (Mouse) protein is Sodium-coupled neutral amino acid transporter 4.